The chain runs to 63 residues: Small ribosomal subunit protein bS21 (63 aa).

Residues 40-52 (KPSVKRKLKSEAA) are compositionally biased toward basic and acidic residues. The tract at residues 40-63 (KPSVKRKLKSEAARKRKNKRGRRY) is disordered. The span at 53–63 (RKRKNKRGRRY) shows a compositional bias: basic residues.

Belongs to the bacterial ribosomal protein bS21 family.

The polypeptide is Small ribosomal subunit protein bS21 (Limosilactobacillus reuteri (strain DSM 20016) (Lactobacillus reuteri)).